Here is a 467-residue protein sequence, read N- to C-terminus: Gamma-aminobutyric acid receptor subunit gamma-2 (467 aa).

The first 39 residues, 1–39 (MSSPNIWSTGSSVYSTPVFSQKMTVWILLLLSLYPGFTS), serve as a signal peptide directing secretion. At 40–275 (QKSDDDYEDY…FDLSRRMGYF (236 aa)) the chain is on the extracellular side. N-linked (GlcNAc...) asparagine glycans are attached at residues asparagine 52 and asparagine 129. Residues cysteine 190 and cysteine 204 are joined by a disulfide bond. Asparagine 247 is a glycosylation site (N-linked (GlcNAc...) asparagine). Residues 276–296 (TIQTYIPCTLIVVLSWVSFWI) traverse the membrane as a helical segment. The Cytoplasmic segment spans residues 297 to 302 (NKDAVP). Residues 303 to 322 (ARTSLGITTVLTMTTLSTIA) form a helical membrane-spanning segment. Topologically, residues 323-334 (RKSLPKVSYVTA) are extracellular. Residues 335 to 359 (MDLFVSVCFIFVFSALVEYGTLHYF) traverse the membrane as a helical segment. The Cytoplasmic portion of the chain corresponds to 360 to 443 (VSNRKPSKDK…IHIRIAKMDS (84 aa)). An interaction with GABARAP region spans residues 425-442 (RTGAWRHGRIHIRIAKMD). A helical membrane pass occupies residues 444–464 (YARIFFPTAFCLFNLVYWVSY). Residues 465 to 467 (LYL) lie on the Extracellular side of the membrane.

The protein belongs to the ligand-gated ion channel (TC 1.A.9) family. Gamma-aminobutyric acid receptor (TC 1.A.9.5) subfamily. GABRG2 sub-subfamily. As to quaternary structure, heteropentamer, formed by a combination of alpha (GABRA1-6), beta (GABRB1-3), gamma (GABRG1-3), delta (GABRD), epsilon (GABRE), rho (GABRR1-3), pi (GABRP) and theta (GABRQ) chains, each subunit exhibiting distinct physiological and pharmacological properties. Interacts with GABARAP. Interacts with KIF21B. Identified in a complex of 720 kDa composed of LHFPL4, NLGN2, GABRA1, GABRB2, GABRG2 and GABRB3. Interacts with LHFPL4. Interacts with SHISA7; interaction leads to the regulation of GABA(A) receptor trafficking, channel deactivation kinetics and pharmacology. In terms of processing, palmitoylated by ZDHHC3/GODZ; required for the accumulation of GABA(A) receptors at the postsynaptic membrane of inhibitory GABAergic synapses. Glycosylated.

The protein resides in the postsynaptic cell membrane. The protein localises to the cell membrane. It is found in the cell projection. It localises to the dendrite. Its subcellular location is the cytoplasmic vesicle membrane. It carries out the reaction chloride(in) = chloride(out). With respect to regulation, allosterically activated by benzodiazepines. Activated by pentobarbital. Inhibited by the antagonist bicuculline. Inhibited by zinc ions. Potentiated by histamine. In terms of biological role, gamma subunit of the heteropentameric ligand-gated chloride channel gated by gamma-aminobutyric acid (GABA), a major inhibitory neurotransmitter in the brain. GABA-gated chloride channels, also named GABA(A) receptors (GABAAR), consist of five subunits arranged around a central pore and contain GABA active binding site(s) located at the alpha and beta subunit interface(s). When activated by GABA, GABAARs selectively allow the flow of chloride anions across the cell membrane down their electrochemical gradient. Gamma-2/GABRG2-containing GABAARs are found at both synaptic and extrasynaptic sites. Chloride influx into the postsynaptic neuron following GABAAR opening decreases the neuron ability to generate a new action potential, thereby reducing nerve transmission. GABAARs containing alpha-1 and beta-2 or -3 subunits exhibit synaptogenic activity; the gamma-2 subunit being necessary but not sufficient to induce rapid synaptic contacts formation. Extrasynaptic gamma-2-containing receptors contribute to the tonic GABAergic inhibition. GABAARs function also as histamine receptor where histamine binds at the interface of two neighboring beta subunits and potentiates GABA response in a gamma-2 subunit-controlled manner. This chain is Gamma-aminobutyric acid receptor subunit gamma-2 (GABRG2), found in Pongo abelii (Sumatran orangutan).